A 739-amino-acid chain; its full sequence is Transcription regulator protein BACH1 (739 aa).

Positions 34-100 (CDVTVLVEGQ…AYTAKLILSK (67 aa)) constitute a BTB domain. Ser-196 carries the post-translational modification Phosphoserine. Disordered stretches follow at residues 287–321 (MESE…PHGL) and 344–391 (KTVK…RSSV). 2 stretches are compositionally biased toward basic and acidic residues: residues 346–364 (VKTE…KPSE) and 376–391 (PKED…RSSV). Ser-448 bears the Phosphoserine mark. The bZIP domain occupies 560–623 (CIHDIRRRSK…GETKQNLTGL (64 aa)). The tract at residues 565-581 (RRRSKNRIAAQRCRKRK) is basic motif. The tract at residues 585–592 (IQNLESEI) is leucine-zipper. The disordered stretch occupies residues 679 to 708 (PPTAPPPCGRGSSAASQELVQESPPTTAAA). The span at 699–708 (QESPPTTAAA) shows a compositional bias: low complexity.

This sequence belongs to the bZIP family. CNC subfamily. In terms of assembly, heterodimer of BACH1 and MAFK. In terms of processing, ubiquitinated by the SCF(FBXL17) complex or by the by the SCF(FBXO22) complex, leading to its degradation by the proteasome. Under oxidative stress, reactive oxygen species covalently modify cysteine residues on the bZIP domain of BACH1 and release it from chromatin. If the BTB domain of BACH1 remains intact, its beta1-alpha6 degron is recognized by FBXO22, promoting its ubiquitination and degradation. If the structural integrity of the beta1-alpha6 degron is compromised, FBXL17 will transiently associate with the BACH1 BTB dimer and remodel it into stably bound monomer for ubiquitination and degradation. Ubiquitous.

Its subcellular location is the nucleus. Functionally, transcriptional regulator that acts as a repressor or activator, depending on the context. Binds to NF-E2 DNA binding sites. Plays important roles in coordinating transcription activation and repression by MAFK. Together with MAF, represses the transcription of genes under the control of the NFE2L2 oxidative stress pathway. This chain is Transcription regulator protein BACH1 (Bach1), found in Mus musculus (Mouse).